Consider the following 124-residue polypeptide: Small ribosomal subunit protein uS12 (124 aa).

Position 89 is a 3-methylthioaspartic acid (Asp89).

Belongs to the universal ribosomal protein uS12 family. In terms of assembly, part of the 30S ribosomal subunit. Contacts proteins S8 and S17. May interact with IF1 in the 30S initiation complex.

With S4 and S5 plays an important role in translational accuracy. Functionally, interacts with and stabilizes bases of the 16S rRNA that are involved in tRNA selection in the A site and with the mRNA backbone. Located at the interface of the 30S and 50S subunits, it traverses the body of the 30S subunit contacting proteins on the other side and probably holding the rRNA structure together. The combined cluster of proteins S8, S12 and S17 appears to hold together the shoulder and platform of the 30S subunit. The sequence is that of Small ribosomal subunit protein uS12 from Shewanella oneidensis (strain ATCC 700550 / JCM 31522 / CIP 106686 / LMG 19005 / NCIMB 14063 / MR-1).